The primary structure comprises 240 residues: MTVRYQIEQLGDSAMMIRFGEEINEQVNGIVHAAAAYIEEQPFPGFIECIPAFTSLTVFYDMYEVYKHLPQGISSPFESVKRDVEERLAEIAEDYEVNRRIVEIPVCYGGEFGPDLEEVAKINQLSPEEVIDIHTNGEYVVYMLGFAPGFPFLGGMSKRIAAPRKSSPRPSIPAGSVGIAGLQTGVYPISTPGGWQLIGKTPLALFRPQENPPTLLRAGDIVKFVRISEKDYHAYKEESN.

194-201 lines the ATP pocket; that stretch reads GWQLIGKT.

This sequence belongs to the PxpB family. As to quaternary structure, forms a complex composed of PxpA, PxpB and PxpC. Interacts with PxpC (KipA). Interaction with PxpC prevents the inhibitory action of PxpB (KipI). Interacts with KinA. Two PxpB monomers bind via their C-domains at a conserved proline in the KinA dimerization and histidine-phosphotransfer (DHp) domain.

The enzyme catalyses 5-oxo-L-proline + ATP + 2 H2O = L-glutamate + ADP + phosphate + H(+). Its function is as follows. Catalyzes the cleavage of 5-oxoproline to form L-glutamate coupled to the hydrolysis of ATP to ADP and inorganic phosphate. In addition, is a potent inhibitor of the autophosphorylation reaction of kinase A (kinA) and its reverse reaction, but does not inhibit phosphate transfer to the Spo0F response regulator once kinase A is phosphorylated. Is an inhibitor of the catalytic domain of kinase A affecting the ATP/ADP reactions and not the phosphotransferase functions of this domain. The inhibition is non-competitive with respect to ATP. The sequence is that of 5-oxoprolinase subunit B from Bacillus subtilis (strain 168).